A 205-amino-acid chain; its full sequence is High frequency lysogenization protein HflD homolog (205 aa).

Belongs to the HflD family.

The protein resides in the cytoplasm. It localises to the cell inner membrane. This is High frequency lysogenization protein HflD homolog from Shewanella halifaxensis (strain HAW-EB4).